The following is a 340-amino-acid chain: 4-hydroxythreonine-4-phosphate dehydrogenase (340 aa).

Residue Thr135 participates in substrate binding. A divalent metal cation-binding residues include His170, His215, and His276. Substrate contacts are provided by Lys284, Asn293, and Arg302.

The protein belongs to the PdxA family. As to quaternary structure, homodimer. Requires a divalent metal cation as cofactor.

It localises to the cytoplasm. It carries out the reaction 4-(phosphooxy)-L-threonine + NAD(+) = 3-amino-2-oxopropyl phosphate + CO2 + NADH. It functions in the pathway cofactor biosynthesis; pyridoxine 5'-phosphate biosynthesis; pyridoxine 5'-phosphate from D-erythrose 4-phosphate: step 4/5. Catalyzes the NAD(P)-dependent oxidation of 4-(phosphooxy)-L-threonine (HTP) into 2-amino-3-oxo-4-(phosphooxy)butyric acid which spontaneously decarboxylates to form 3-amino-2-oxopropyl phosphate (AHAP). The chain is 4-hydroxythreonine-4-phosphate dehydrogenase from Synechococcus sp. (strain JA-2-3B'a(2-13)) (Cyanobacteria bacterium Yellowstone B-Prime).